The chain runs to 139 residues: Protein GOS9 (139 aa).

Positions 5–139 constitute a Jacalin-type lectin domain; that stretch reads LVKIGTWGGN…VDSIGVYVHI (135 aa).

As to expression, expressed mainly in roots.

This chain is Protein GOS9 (GOS9), found in Oryza sativa subsp. indica (Rice).